A 222-amino-acid polypeptide reads, in one-letter code: MAASVRQARSLLGVAATLAPGSRGYRARPPPRRRPGPRWPDPEDLLTPRWQLGPRYAAKQFARYGAASGVVPGSLWPSPEQLRELEAEEREWYPSLATMQESLRVKQLAEEQKRREREQHIAECMAKMPQMIVNWQQQQRENWEKAQADKERRARLQAEAQELLGYQVDPRSARFQELLQDLEKKERKRLKEEKQKRKKEARAAALAAAVAQDPAASGAPSS.

Disordered regions lie at residues 19-46 (APGSRGYRARPPPRRRPGPRWPDPEDLL) and 188-222 (KRLKEEKQKRKKEARAAALAAAVAQDPAASGAPSS). Positions 25–36 (YRARPPPRRRPG) are enriched in basic residues. A coiled-coil region spans residues 99–212 (MQESLRVKQL…AAALAAAVAQ (114 aa)). Positions 184–200 (KKERKRLKEEKQKRKKE) match the Nuclear localization signal motif. Residues 203–212 (AAALAAAVAQ) are compositionally biased toward low complexity.

The protein belongs to the mitochondrion-specific ribosomal protein mL64 family. In terms of assembly, component of the mitochondrial large ribosomal subunit (mt-LSU). Mature mammalian 55S mitochondrial ribosomes consist of a small (28S) and a large (39S) subunit. The 28S small subunit contains a 12S ribosomal RNA (12S mt-rRNA) and 30 different proteins. The 39S large subunit contains a 16S rRNA (16S mt-rRNA), a copy of mitochondrial valine transfer RNA (mt-tRNA(Val)), which plays an integral structural role, and 52 different proteins. Interacts with GADD45A, GADD45B and GADD45G. Interacts with NR4A1 via the NR4A1 AB domain. Interacts with ATAD3A and ATAD3B. (Microbial infection) Interacts with the human papilloma virus type 16 (HPV 16) minor capsid protein L2. In terms of tissue distribution, widely expressed. Highly expressed in the thyroid gland, heart, lymph nodes, trachea and adrenal tissues. Expressed at lower level in liver skeletal muscle, kidney, pancreas, testis, ovary and stomach. Barely detectable in adrenal adenoma and papillary thyroid cancer.

It localises to the mitochondrion. It is found in the nucleus. Functionally, acts as a negative regulator of G1 to S cell cycle phase progression by inhibiting cyclin-dependent kinases. Inhibitory effects are additive with GADD45 proteins but also occur in the absence of GADD45 proteins. Acts as a repressor of the orphan nuclear receptor NR4A1 by inhibiting AB domain-mediated transcriptional activity. May be involved in the hormone-mediated regulation of NR4A1 transcriptional activity. May play a role in mitochondrial protein synthesis. This Homo sapiens (Human) protein is Large ribosomal subunit protein mL64 (GADD45GIP1).